A 1086-amino-acid polypeptide reads, in one-letter code: Auxin response factor 19 (1086 aa).

Residues 126–228 (FCKTLTASDT…QLMLGIRRAN (103 aa)) constitute a DNA-binding region (TF-B3). Positions 454 to 485 (PSKLLNFQSPNLSSANSQFNKPNTVNHISQQM) are enriched in polar residues. 4 disordered regions span residues 454 to 504 (PSKL…QQQQ), 545 to 564 (QSPNQPTGFSQSQLQQQSML), 624 to 647 (LSQNPQQLQMQQQSSKPSPSQQLQ), and 659 to 788 (QQQS…SVFE). Residues 486–504 (QAQPAMVKSQQQQQQQQQQ) are compositionally biased toward low complexity. The segment covering 659–697 (QQQSIPPVSSSLQPQLSALQQTQSHQLQQLLSSQNQQPL) has biased composition (low complexity). Residues 700–710 (GNNSFPASTFM) are compositionally biased toward polar residues. The segment covering 711-724 (QPPQIQVSPQQQGQ) has biased composition (low complexity). Residues 747 to 771 (SCSTSPSANNTGHDNVSPTNFLSRN) show a composition bias toward polar residues. Over residues 772–785 (QQQGQAASVSASDS) the composition is skewed to low complexity. Positions 958-1051 (RTYTKVQKRG…EVQQMSLDGD (94 aa)) constitute a PB1 domain.

The protein belongs to the ARF family. Homodimers and heterodimers. Interacts with the auxin-responsive protein IAA1. Binds to JMJ30. Binds to ATXR2 in the nucleus.

The protein resides in the nucleus. Its function is as follows. Auxin response factors (ARFs) are transcriptional factors that bind specifically to the DNA sequence 5'-TGTCTC-3' found in the auxin-responsive promoter elements (AuxREs). Could act as transcriptional activator or repressor. Formation of heterodimers with Aux/IAA proteins may alter their ability to modulate early auxin response genes expression. Involved in ethylene responses. Regulates lateral root formation through direct regulation of LBD16 and/or LBD29. Functionally redundant with ARF7. Involved in cellular dedifferentiation during callus formation on callus-inducing medium (CIM) and in an ATXR2-dependent manner. This Arabidopsis thaliana (Mouse-ear cress) protein is Auxin response factor 19.